The sequence spans 238 residues: Ribitol-5-phosphate cytidylyltransferase 2 (238 aa).

CTP contacts are provided by residues 7–10 and 81–87; these read LAGG and GTDRNET.

The protein belongs to the IspD/TarI cytidylyltransferase family. TarI subfamily.

It catalyses the reaction D-ribitol 5-phosphate + CTP + H(+) = CDP-L-ribitol + diphosphate. Its pathway is cell wall biogenesis; poly(ribitol phosphate) teichoic acid biosynthesis. Catalyzes the transfer of the cytidylyl group of CTP to D-ribitol 5-phosphate. This is Ribitol-5-phosphate cytidylyltransferase 2 from Staphylococcus aureus (strain MRSA252).